We begin with the raw amino-acid sequence, 43 residues long: Protein PsbN (43 aa).

The chain crosses the membrane as a helical span at residues Leu-7–Phe-27.

It belongs to the PsbN family.

Its subcellular location is the cellular thylakoid membrane. May play a role in photosystem I and II biogenesis. This Crocosphaera subtropica (strain ATCC 51142 / BH68) (Cyanothece sp. (strain ATCC 51142)) protein is Protein PsbN.